The sequence spans 489 residues: MSDSSSSDGEDNQKFLGNRKKNLTKKKVVTEEIEKDDEEDVKEKSFAELGVSQPLCDACQRLGWMKPSKIQQAALPHALQGKDVIGLAETGSGKTGAFAIPVLQSLLDHPQAFFCLVLTPTRELAFQIGQQFEALGSGIGLIAAVIVGGVDMAAQAMALARRPHIIVATPGRLVDHLENTKGFNLKALKFLIMDEADRILNMDFEVELDKILKVIPRERRTYLFSATMTKKVSKLERASLRDPARVSVSSRYKTVDNLKQHYIFVPNKYKETYLVYLLNEHAGNSAIVFCATCATTMQIAVMLRQLGMQAVPLHGQMSQEKRLGSLNKFKSKAREILVCTDVAARGLDIPHVDMVINYDMPSQSKDYVHRVGRTARAGRSGIAITVVTQYDVEAYQKIEANLGKKLDEYKCVENEVMVLVERTQEATENARIEMKEMDEKKKSGKKRRQNDDFGDTEESGGRFKMGIKSMGGRGGSGGGRGGKKKKMSK.

Residues 44–72 (KSFAELGVSQPLCDACQRLGWMKPSKIQQ) carry the Q motif motif. The Helicase ATP-binding domain occupies 75 to 246 (LPHALQGKDV…RASLRDPARV (172 aa)). An ATP-binding site is contributed by 88–95 (AETGSGKT). The DEAD box motif lies at 194-197 (DEAD). Positions 257–417 (NLKQHYIFVP…EYKCVENEVM (161 aa)) constitute a Helicase C-terminal domain. A disordered region spans residues 433 to 489 (EMKEMDEKKKSGKKRRQNDDFGDTEESGGRFKMGIKSMGGRGGSGGGRGGKKKKMSK). Over residues 469 to 480 (SMGGRGGSGGGR) the composition is skewed to gly residues.

This sequence belongs to the DEAD box helicase family. DDX47/RRP3 subfamily.

It localises to the nucleus. It catalyses the reaction ATP + H2O = ADP + phosphate + H(+). Functionally, probable ATP-dependent RNA helicase which may be involved in ribosome biogenesis. In Caenorhabditis elegans, this protein is Putative ATP-dependent RNA helicase T26G10.1.